The sequence spans 406 residues: MERPDLKNPDLYTQQVPHDIFARLRREEPVYWNPESDGSGFWAVLRHKDIIEVSRQPLLFSSAYENGGHRIFNENEVGLTNAGEAAVGVPFISLDPPVHTQYRKVIMPALSPARLGDIEQRIRVRAEALIERIPLGEEVDLVPLLSAPLPLLTLAELLGLDPDCWYELYNWTNAFVGEDDPEFRKSPEDMAKVLGEFMGFCQELFESRRANPGPDIATLLANAEINGQPVALRDFIGNLTLTLVGGNETTRNSISHTIVTLSQQPDQWDILRQRPELLKTATAEMVRHASPVLHMRRTAMEDTEIGGQAIAKGDKVVLWYASGNRDESVFSDADRFDVTRTGVQHVGFGSGQHVCVGSRLAEMQLRVVFEILSTRVKRFELCSKSRRFRSNFLNGLKNLNVVLVPK.

Cysteine 355 contacts heme.

This sequence belongs to the cytochrome P450 family. Heme serves as cofactor.

It carries out the reaction linalool + 2 reduced [NADPH--hemoprotein reductase] + 2 O2 = (6E)-8-oxolinalool + 2 oxidized [NADPH--hemoprotein reductase] + 3 H2O + 2 H(+). Its pathway is terpene metabolism; linalool degradation. In terms of biological role, catalyzes the 8-methyl hydroxylation of linalool. The chain is Linalool 8-monooxygenase (linC) from Pseudomonas putida (Arthrobacter siderocapsulatus).